A 206-amino-acid polypeptide reads, in one-letter code: Thymidylate kinase (206 aa).

Residue 16-23 participates in ATP binding; sequence GIDGTGKS.

This sequence belongs to the thymidylate kinase family.

It carries out the reaction dTMP + ATP = dTDP + ADP. Phosphorylation of dTMP to form dTDP in both de novo and salvage pathways of dTTP synthesis. The sequence is that of Thymidylate kinase from Akkermansia muciniphila (strain ATCC BAA-835 / DSM 22959 / JCM 33894 / BCRC 81048 / CCUG 64013 / CIP 107961 / Muc).